The following is a 190-amino-acid chain: Peptidyl-tRNA hydrolase (190 aa).

A tRNA-binding site is contributed by Tyr14. The active-site Proton acceptor is the His19. Positions 64, 66, and 112 each coordinate tRNA.

It belongs to the PTH family. In terms of assembly, monomer.

Its subcellular location is the cytoplasm. The catalysed reaction is an N-acyl-L-alpha-aminoacyl-tRNA + H2O = an N-acyl-L-amino acid + a tRNA + H(+). Its function is as follows. Hydrolyzes ribosome-free peptidyl-tRNAs (with 1 or more amino acids incorporated), which drop off the ribosome during protein synthesis, or as a result of ribosome stalling. In terms of biological role, catalyzes the release of premature peptidyl moieties from peptidyl-tRNA molecules trapped in stalled 50S ribosomal subunits, and thus maintains levels of free tRNAs and 50S ribosomes. The chain is Peptidyl-tRNA hydrolase from Chlorobium chlorochromatii (strain CaD3).